The chain runs to 643 residues: Pescadillo homolog (643 aa).

Positions 305-323 are enriched in basic and acidic residues; the sequence is EKTKEKNHKSDNNPHEHTT. The disordered stretch occupies residues 305–329; it reads EKTKEKNHKSDNNPHEHTTNIDNNN. The BRCT domain maps to 378–474; the sequence is KLKELFKNHI…NILPCSDYLT (97 aa). A coiled-coil region spans residues 531–615; the sequence is NYKEEEEEEN…IVLSKKKRKL (85 aa).

It belongs to the pescadillo family. Interacts with dual specificity protein phosphatase YVH1.

It localises to the nucleus. The protein resides in the nucleolus. Its subcellular location is the nucleoplasm. Its function is as follows. Required for maturation of ribosomal RNAs and formation of the large ribosomal subunit. The chain is Pescadillo homolog from Plasmodium falciparum (isolate 3D7).